We begin with the raw amino-acid sequence, 740 residues long: MAFFTPWKLSSQKLGFFLVTFGFIWGMMLLHFTIQQRTQPESSSMLREQILDLSKRYIKALAEENRNVVDGPYAGVMTAYDLKKTLAVLLDNILQRIGKLESKVDNLVNGTGANSTNSTTAVPSLVSLEKISVADIINGVQEKCVLPPMDGYPHCEGKIKWMKDMWRSDPCYADYGVDGTSCSFFIYLSEVENWCPRLPWRAKNPYEEADHNSLAEIRTDFNILYSMMKKHEEFRWMRLRIRRMADAWIQAIKSLAEKQNLEKRKRKKILVHLGLLTKESGFKIAETAFSGGPLGELVQWSDLITSLYLLGHDIRISASLAELKEIMKKVVGNRSGCPTVGDRIVELIYIDIVGLAQFKKTLGPSWVHYQCMLRVLDSFGTEPEFNHASYAQSKGHKTPWGKWNLNPQQFYTMFPHTPDNSFLGFVVEQHLNSSDIHHINEIKRQNQSLVYGKVDSFWKNKKIYLDIIHTYMEVHATVYGSSTKNIPSYVKNHGILSGRDLQFLLRETKLFVGLGFPYEGPAPLEAIANGCAFLNPKFSPPKSSKNTDFFIGKPTLRELTSQHPYAEVFIGRPHVWTVDLNNREEVEDAVKAILNQKIEPYMPYEFTCEGMLQRINAFIEKQDFCHGQVMWPPLSALQVKLAEPGQSCKQVCQENQLICEPSFFQHLNKEKDLLKYRVTCQSSELYKDILVPSFYPKSKHCVLQGDLLLFSCAGAHPTHQRICPCRDFIKGQVALCKDCL.

Over 1 to 13 the chain is Cytoplasmic; it reads MAFFTPWKLSSQK. Residues 14–30 traverse the membrane as a helical; Signal-anchor for type II membrane protein segment; that stretch reads LGFFLVTFGFIWGMMLL. At 31-740 the chain is on the lumenal side; sequence HFTIQQRTQP…GQVALCKDCL (710 aa). Residues Asn109, Asn114, and Asn117 are each glycosylated (N-linked (GlcNAc...) asparagine). 9 cysteine pairs are disulfide-bonded: Cys144–Cys182, Cys155–Cys195, Cys171–Cys337, Cys371–Cys625, Cys648–Cys723, Cys652–Cys725, Cys659–Cys712, Cys680–Cys701, and Cys736–Cys739. Residues 212-740 form a sufficient for catalytic activity region; the sequence is NSLAEIRTDF…GQVALCKDCL (529 aa). N-linked (GlcNAc...) asparagine glycosylation occurs at Asn333. 377 to 378 contributes to the substrate binding site; the sequence is DS. Asn432 and Asn446 each carry an N-linked (GlcNAc...) asparagine glycan. Residue Glu525 coordinates UDP-N-acetyl-alpha-D-glucosamine. Position 553 (Lys553) interacts with substrate.

This sequence belongs to the glycosyltransferase 18 family. N-glycosylated. Post-translationally, a secreted form is released from the membrane after cleavage by gamma-secretase.

The protein localises to the golgi apparatus membrane. It localises to the secreted. The enzyme catalyses N(4)-{beta-D-GlcNAc-(1-&gt;2)-[beta-D-GlcNAc-(1-&gt;4)]-alpha-D-Man-(1-&gt;3)-[beta-D-GlcNAc-(1-&gt;2)-alpha-D-Man-(1-&gt;6)]-beta-D-Man-(1-&gt;4)-beta-D-GlcNAc-(1-&gt;4)-beta-D-GlcNAc}-L-asparaginyl-[protein] + UDP-N-acetyl-alpha-D-glucosamine = N(4)-{beta-D-GlcNAc-(1-&gt;2)-[beta-D-GlcNAc-(1-&gt;4)]-alpha-D-Man-(1-&gt;3)-[beta-D-GlcNAc-(1-&gt;2)-[beta-D-GlcNAc-(1-&gt;6)]-alpha-D-Man-(1-&gt;6)]-beta-D-Man-(1-&gt;4)-beta-D-GlcNAc-(1-&gt;4)-beta-D-GlcNAc}-L-asparaginyl-[protein] + UDP + H(+). Its pathway is protein modification; protein glycosylation. Its function is as follows. Catalyzes the addition of N-acetylglucosamine (GlcNAc) in beta 1-6 linkage to the alpha-linked mannose of biantennary N-linked oligosaccharides. Catalyzes an important step in the biosynthesis of branched, complex-type N-glycans, such as those found on EGFR, TGFR (TGF-beta receptor) and CDH2. Via its role in the biosynthesis of complex N-glycans, plays an important role in the activation of cellular signaling pathways, reorganization of the actin cytoskeleton, cell-cell adhesion and cell migration. MGAT5-dependent EGFR N-glycosylation enhances the interaction between EGFR and LGALS3 and thereby prevents rapid EGFR endocytosis and prolongs EGFR signaling. Required for efficient interaction between TGFB1 and its receptor. Enhances activation of intracellular signaling pathways by several types of growth factors, including FGF2, PDGF, IGF, TGFB1 and EGF. MGAT5-dependent CDH2 N-glycosylation inhibits CDH2-mediated homotypic cell-cell adhesion and contributes to the regulation of downstream signaling pathways. Promotes cell migration. Contributes to the regulation of the inflammatory response. MGAT5-dependent TCR N-glycosylation enhances the interaction between TCR and LGALS3, limits agonist-induced TCR clustering, and thereby dampens TCR-mediated responses to antigens. Required for normal leukocyte evasation and accumulation at sites of inflammation. Inhibits attachment of monocytes to the vascular endothelium and subsequent monocyte diapedesis. Promotes proliferation of umbilical vein endothelial cells and angiogenesis, at least in part by promoting the release of the growth factor FGF2 from the extracellular matrix. The sequence is that of Alpha-1,6-mannosylglycoprotein 6-beta-N-acetylglucosaminyltransferase A (MGAT5) from Cricetulus griseus (Chinese hamster).